A 122-amino-acid polypeptide reads, in one-letter code: Small ribosomal subunit protein uS13 (122 aa).

The disordered stretch occupies residues 93–122; the sequence is RRGLPVRGQRTKTNARTRKGPKKTVAGKKK.

The protein belongs to the universal ribosomal protein uS13 family. As to quaternary structure, part of the 30S ribosomal subunit. Forms a loose heterodimer with protein S19. Forms two bridges to the 50S subunit in the 70S ribosome.

In terms of biological role, located at the top of the head of the 30S subunit, it contacts several helices of the 16S rRNA. In the 70S ribosome it contacts the 23S rRNA (bridge B1a) and protein L5 of the 50S subunit (bridge B1b), connecting the 2 subunits; these bridges are implicated in subunit movement. Contacts the tRNAs in the A and P-sites. This is Small ribosomal subunit protein uS13 from Micrococcus luteus (strain ATCC 4698 / DSM 20030 / JCM 1464 / CCM 169 / CCUG 5858 / IAM 1056 / NBRC 3333 / NCIMB 9278 / NCTC 2665 / VKM Ac-2230) (Micrococcus lysodeikticus).